The primary structure comprises 305 residues: MSNLPFTVAALYCFAPLPQYESLREPLAKLCCSNGIKGTLLLAAEGINGTVAGTPQAIEKLVQHITAIPGLADPELKYSHATEMPFHRMKVRLKREIVTMGVDGIDPLKSVGTYIAPQDWNALIADENTVVVDTRNDYEYAIGTFEGALDPQTKTFREFPEWVEQNRDKLEGKKIAMFCTGGIRCEKATAFVKGLGFDDVFHLKGGILKYLEEVPREDSMWNGECFVFDERVAVGHGLAESDVELCRACRRPISPEDKLSQFFEEGVSCAGCYDERTPEDRARYAERQKQVKLAEMRGAHKHIGS.

The Rhodanese domain maps to 125–219; the sequence is ADENTVVVDT…YLEEVPREDS (95 aa). The active-site Cysteine persulfide intermediate is C179.

Belongs to the TrhO family.

The catalysed reaction is uridine(34) in tRNA + AH2 + O2 = 5-hydroxyuridine(34) in tRNA + A + H2O. In terms of biological role, catalyzes oxygen-dependent 5-hydroxyuridine (ho5U) modification at position 34 in tRNAs. This Brucella anthropi (strain ATCC 49188 / DSM 6882 / CCUG 24695 / JCM 21032 / LMG 3331 / NBRC 15819 / NCTC 12168 / Alc 37) (Ochrobactrum anthropi) protein is tRNA uridine(34) hydroxylase.